The sequence spans 142 residues: Large ribosomal subunit protein uL13 (142 aa).

It belongs to the universal ribosomal protein uL13 family. Part of the 50S ribosomal subunit.

Its function is as follows. This protein is one of the early assembly proteins of the 50S ribosomal subunit, although it is not seen to bind rRNA by itself. It is important during the early stages of 50S assembly. This chain is Large ribosomal subunit protein uL13, found in Akkermansia muciniphila (strain ATCC BAA-835 / DSM 22959 / JCM 33894 / BCRC 81048 / CCUG 64013 / CIP 107961 / Muc).